A 188-amino-acid polypeptide reads, in one-letter code: Threonylcarbamoyl-AMP synthase (188 aa).

A YrdC-like domain is found at 3 to 188 (QLHPSDIKDI…RSGKILRNGQ (186 aa)).

The protein belongs to the SUA5 family. TsaC subfamily.

The protein resides in the cytoplasm. The enzyme catalyses L-threonine + hydrogencarbonate + ATP = L-threonylcarbamoyladenylate + diphosphate + H2O. Its function is as follows. Required for the formation of a threonylcarbamoyl group on adenosine at position 37 (t(6)A37) in tRNAs that read codons beginning with adenine. Catalyzes the conversion of L-threonine, HCO(3)(-)/CO(2) and ATP to give threonylcarbamoyl-AMP (TC-AMP) as the acyladenylate intermediate, with the release of diphosphate. The protein is Threonylcarbamoyl-AMP synthase of Shewanella baltica (strain OS195).